The chain runs to 278 residues: Putative cysteine-rich repeat secretory protein 17 (278 aa).

An N-terminal signal peptide occupies residues 1 to 32 (MYSLSSVSKHLILVHILALVATQLLLIRSVSS). 2 Gnk2-homologous domains span residues 39–142 (YLNH…SIDN) and 148–265 (YGDS…LYPF).

It belongs to the cysteine-rich repeat secretory protein family.

Its subcellular location is the secreted. The chain is Putative cysteine-rich repeat secretory protein 17 (CRRSP17) from Arabidopsis thaliana (Mouse-ear cress).